Here is a 332-residue protein sequence, read N- to C-terminus: Nucleoid-associated protein VP2128 (332 aa).

This sequence belongs to the YejK family.

It localises to the cytoplasm. It is found in the nucleoid. This is Nucleoid-associated protein VP2128 from Vibrio parahaemolyticus serotype O3:K6 (strain RIMD 2210633).